The following is a 1171-amino-acid chain: 7,8-linoleate diol synthase (1171 aa).

Over residues 1 to 22 (MASSSSSGSSTRSSSPSDPPSS) the composition is skewed to low complexity. Residues 1 to 56 (MASSSSSGSSTRSSSPSDPPSSFFQKLGAFLGLFSKPQPPRPDYPHAPGNSAREEQ) form a disordered region. The fatty acid alpha-dioxygenase stretch occupies residues 114–457 (TDGLITGLWE…DGSFEDEGLI (344 aa)). His-213 is a binding site for heme b. Ca(2+)-binding residues include Asp-214, Ser-229, Tyr-231, Asp-233, and Ser-235. Tyr-385 is a catalytic residue. His-388 serves as a coordination point for heme b. An epoxy alcohol synthase region spans residues 675–1171 (KILNNQKDFK…PMNMKIRWDD (497 aa)). A disordered region spans residues 873–900 (GLANGGANGHANGNANGHTNGNGIHQNG). Over residues 881-895 (GHANGNANGHTNGNG) the composition is skewed to low complexity. Position 1089 (Cys-1089) interacts with heme.

This sequence in the N-terminal section; belongs to the peroxidase family. It in the C-terminal section; belongs to the cytochrome P450 family. Homotetramer. Heme b is required as a cofactor. Requires Ca(2+) as cofactor. The cofactor is heme.

It catalyses the reaction (9Z,12Z)-octadecadienoate + O2 = (8R,9Z,12Z)-8-hydroperoxyoctadeca-9,12-dienoate. The catalysed reaction is (8R,9Z,12Z)-8-hydroperoxyoctadeca-9,12-dienoate = (7S,8S,9Z,12Z)-7,8-dihydroxyoctadeca-9,12-dienoate. In terms of biological role, 7,8-linoleate diol synthase is a bifunctional enzyme that converts linoleic acid (18:2n-6) into 8-hydroperoxy-8(E),12(Z)-octadecadienoic acid (8-HPODE) and then catalyzes the isomerization of the resulting hydroperoxide to 7,8-dihydroxy-9(Z),12(Z)-octadecadienoic acid (7,8-DiHODE). In Pyricularia oryzae (strain 70-15 / ATCC MYA-4617 / FGSC 8958) (Rice blast fungus), this protein is 7,8-linoleate diol synthase.